Reading from the N-terminus, the 427-residue chain is Chitin disaccharide deacetylase (427 aa).

The first 22 residues, 1–22 (MKLNKLAIATLVSAALSQYAFA), serve as a signal peptide directing secretion. Residues 28–326 (GTIYLTFDDG…LAKQAGYVFD (299 aa)) enclose the NodB homology domain. 2 consecutive Chitin-binding type-3 domains span residues 333-375 (PNWQ…SSLW) and 382-419 (TNWT…TPNS).

The protein belongs to the polysaccharide deacetylase family. Carbohydrate-binding module 12 subfamily.

The catalysed reaction is N,N'-diacetylchitobiose + H2O = N-acetyl-beta-D-glucosaminyl-(1-&gt;4)-D-glucosamine + acetate. It functions in the pathway glycan degradation; chitin degradation. Functionally, specifically catalyzes the degradation of N,N'-diacetylchitobiose. Key enzyme in the chitin catabolic cascade. The sequence is that of Chitin disaccharide deacetylase (deaA) from Vibrio alginolyticus.